A 958-amino-acid polypeptide reads, in one-letter code: Importin-13 (958 aa).

HEAT repeat units follow at residues 19-49 (ENVE…QAQV), 51-83 (PQAW…RSPA), 90-130 (PDQY…LSMM), 137-174 (AVAD…EFQT), 189-226 (LAQE…SWVQ), 231-263 (LMDC…NAIS), 271-320 (VNTL…ALLD), 325-367 (WQSF…DDIL), 370-433 (EPDK…YEML), 435-471 (AELL…FQSI), 482-517 (VVPG…WLAD), 519-553 (PVMI…CREC), 557-595 (LPPY…LLSA), 598-643 (VEEI…SNLF), 671-711 (PVVV…VKTL), 715-749 (FAPM…VHIF), 756-798 (FPPI…ALKR), 810-840 (VKAL…TELL), 855-888 (ENGK…FALN), and 892-926 (FSYL…QQIL). Residues 40–106 (AQKWLMQAQV…KSQLFTHITR (67 aa)) enclose the Importin N-terminal domain.

It belongs to the importin beta family.

It is found in the cytoplasm. The protein resides in the nucleus. Functions in nuclear protein import as nuclear transport receptor. Serves as receptor for nuclear localization signals (NLS) in cargo substrates. Is thought to mediate docking of the importin/substrate complex to the nuclear pore complex (NPC) through binding to nucleoporin and the complex is subsequently translocated through the pore by an energy requiring, Ran-dependent mechanism. At the nucleoplasmic side of the NPC, Ran binds to the importin, the importin/substrate complex dissociates and importin is re-exported from the nucleus to the cytoplasm where GTP hydrolysis releases Ran. The directionality of nuclear import is thought to be conferred by an asymmetric distribution of the GTP- and GDP-bound forms of Ran between the cytoplasm and nucleus. In Gallus gallus (Chicken), this protein is Importin-13 (IPO13).